The sequence spans 383 residues: MTASSPSLSPTLELACELIRRPSVTPLDADCQALMMRRLEAAGFALEPMRIEEVDNFWARRGGDGPVLCFAGHTDVVPTGPLQAWQHQPFDALIDDQGMLCGRGAADMKGSLASMIVAVERFVADHPEHKGAIAFLITSDEEGPAHHGTKAVVERLAARGERLDWCIVGEPSSTSLVGDVVKNGRRGSLGAKLTIRGVQGHVAYPHLAKNPIHLAAPALAELAAEHWDDGNAFFPPTSFQVSNLNSGTGATNVIPGELTALFNFRFSTESTVEGLQKRVEAILDKHGLDWHVEWALSGLPFLTEPGELLDAVAASIRAVTGRETQPSTSGGTSDGRFIATMGTQVVELGPVNATIHQVNERVLASDLELLTEIYYQTLVRLLA.

Residue H73 coordinates Zn(2+). The active site involves D75. D107 is a binding site for Zn(2+). E141 serves as the catalytic Proton acceptor. Residues E142, E170, and H356 each contribute to the Zn(2+) site.

The protein belongs to the peptidase M20A family. DapE subfamily. In terms of assembly, homodimer. The cofactor is Zn(2+). Co(2+) is required as a cofactor.

It carries out the reaction N-succinyl-(2S,6S)-2,6-diaminopimelate + H2O = (2S,6S)-2,6-diaminopimelate + succinate. It functions in the pathway amino-acid biosynthesis; L-lysine biosynthesis via DAP pathway; LL-2,6-diaminopimelate from (S)-tetrahydrodipicolinate (succinylase route): step 3/3. Its function is as follows. Catalyzes the hydrolysis of N-succinyl-L,L-diaminopimelic acid (SDAP), forming succinate and LL-2,6-diaminopimelate (DAP), an intermediate involved in the bacterial biosynthesis of lysine and meso-diaminopimelic acid, an essential component of bacterial cell walls. The chain is Succinyl-diaminopimelate desuccinylase from Pseudomonas aeruginosa (strain ATCC 15692 / DSM 22644 / CIP 104116 / JCM 14847 / LMG 12228 / 1C / PRS 101 / PAO1).